The following is a 277-amino-acid chain: Inositol monophosphatase 1 (277 aa).

Residues Glu70, Asp90, Ile92, and Asp93 each coordinate Mg(2+). Glu70 is a substrate binding site. Position 92-95 (92-95) interacts with substrate; that stretch reads IDGT. A Phosphothreonine modification is found at Thr168. Substrate-binding positions include 194–196, Glu213, and Asp220; that span reads GTA. A Mg(2+)-binding site is contributed by Asp220.

This sequence belongs to the inositol monophosphatase superfamily. As to quaternary structure, homodimer. It depends on Mg(2+) as a cofactor.

The protein resides in the cytoplasm. It carries out the reaction a myo-inositol phosphate + H2O = myo-inositol + phosphate. It catalyses the reaction 1D-myo-inositol 1-phosphate + H2O = myo-inositol + phosphate. The catalysed reaction is 1D-myo-inositol 2-phosphate + H2O = myo-inositol + phosphate. The enzyme catalyses 1D-myo-inositol 3-phosphate + H2O = myo-inositol + phosphate. It carries out the reaction 1D-myo-inositol 4-phosphate + H2O = myo-inositol + phosphate. It catalyses the reaction 1D-myo-inositol 5-phosphate + H2O = myo-inositol + phosphate. The catalysed reaction is 1D-myo-inositol 6-phosphate + H2O = myo-inositol + phosphate. The enzyme catalyses scyllo-inositol 1-phosphate + H2O = scyllo-inositol + phosphate. It carries out the reaction alpha-D-galactose 1-phosphate + H2O = D-galactose + phosphate. It catalyses the reaction alpha-D-glucose 1-phosphate + H2O = D-glucose + phosphate. The catalysed reaction is D-glucose 6-phosphate + H2O = D-glucose + phosphate. The enzyme catalyses beta-D-fructose 1-phosphate + H2O = D-fructose + phosphate. It carries out the reaction glycerol 2-phosphate + H2O = glycerol + phosphate. It catalyses the reaction adenosine 2'-phosphate + H2O = adenosine + phosphate. The protein operates within polyol metabolism; myo-inositol biosynthesis; myo-inositol from D-glucose 6-phosphate: step 2/2. Inhibited by Li(+), Ca(2+) and Mn(2+), but also by Mg(2+) at concentrations above 3 mM. Phosphatase involved in the dephosphorylation of myo-inositol monophosphate to generate myo-inositol. Is also able to dephosphorylate scyllo-inositol-phosphate, myo-inositol 1,4-diphosphate, scyllo-inositol-1,3-diphosphate and scyllo-inositol-1,4-diphosphate. Also dephosphorylates in vitro other sugar-phosphates including D-galactose-1-phosphate, glucose-1-phosphate, glucose-6-phosphate, fructose-1-phosphate, beta-glycerophosphate and 2'-AMP. Responsible for the provision of inositol required for synthesis of phosphatidylinositol and polyphosphoinositides, and involved in maintaining normal brain function. Has been implicated as the pharmacological target for lithium Li(+) action in brain. This chain is Inositol monophosphatase 1 (IMPA1), found in Sus scrofa (Pig).